Reading from the N-terminus, the 271-residue chain is 3-methyl-2-oxobutanoate hydroxymethyltransferase (271 aa).

Mg(2+)-binding residues include Asp-51 and Asp-90. 3-methyl-2-oxobutanoate-binding positions include 51-52 (DS), Asp-90, and Lys-119. Glu-121 provides a ligand contact to Mg(2+). Glu-188 acts as the Proton acceptor in catalysis.

It belongs to the PanB family. As to quaternary structure, homodecamer; pentamer of dimers. Mg(2+) is required as a cofactor.

Its subcellular location is the cytoplasm. It carries out the reaction 3-methyl-2-oxobutanoate + (6R)-5,10-methylene-5,6,7,8-tetrahydrofolate + H2O = 2-dehydropantoate + (6S)-5,6,7,8-tetrahydrofolate. It functions in the pathway cofactor biosynthesis; (R)-pantothenate biosynthesis; (R)-pantoate from 3-methyl-2-oxobutanoate: step 1/2. Functionally, catalyzes the reversible reaction in which hydroxymethyl group from 5,10-methylenetetrahydrofolate is transferred onto alpha-ketoisovalerate to form ketopantoate. The polypeptide is 3-methyl-2-oxobutanoate hydroxymethyltransferase (Azoarcus sp. (strain BH72)).